The sequence spans 247 residues: MHTQVLFEHPLNEKMRTWLRIEFLIQQLSVNLPLADHADALHFFRNIGDLLDVFERGEVRTELLKELERQQRKLQAWVEVPGVDQSRIEALRQQLKTAGSILISAPRIGQQLREDRLIALVRQRLSIPGGCCSFDLPTLHIWLHLPQEQRDAQVETWIASLNPLNQALTLILDLIRNSSPFRKQTSLNGFYQDNGDDADLLRLQLALDSQLYPQISGHKSRFAIRFMPLDSENGLVPERLDFELACC.

The protein belongs to the ZapD family. In terms of assembly, interacts with FtsZ.

It is found in the cytoplasm. Its function is as follows. Cell division factor that enhances FtsZ-ring assembly. Directly interacts with FtsZ and promotes bundling of FtsZ protofilaments, with a reduction in FtsZ GTPase activity. The chain is Cell division protein ZapD from Citrobacter koseri (strain ATCC BAA-895 / CDC 4225-83 / SGSC4696).